The primary structure comprises 324 residues: Kelch domain-containing protein PF0436 (324 aa).

Kelch repeat units lie at residues 112-160 (EVLL…LWDG), 254-301 (GIYI…WDGR), and 303-323 (IYIV…FTPK).

This Pyrococcus furiosus (strain ATCC 43587 / DSM 3638 / JCM 8422 / Vc1) protein is Kelch domain-containing protein PF0436.